The chain runs to 381 residues: Chaperone protein DnaJ (381 aa).

Residues 5–70 (DYYEVLGLQK…QKRAAYDQYG (66 aa)) form the J domain. A CR-type zinc finger spans residues 133 to 211 (GTTKDIQINT…CHGEGRVHKK (79 aa)). 8 residues coordinate Zn(2+): Cys146, Cys149, Cys163, Cys166, Cys185, Cys188, Cys199, and Cys202. CXXCXGXG motif repeat units lie at residues 146 to 153 (CDSCGGSG), 163 to 170 (CPHCHGSG), 185 to 192 (CPTCHGSG), and 199 to 206 (CRSCHGEG).

It belongs to the DnaJ family. As to quaternary structure, homodimer. Zn(2+) serves as cofactor.

Its subcellular location is the cytoplasm. Its function is as follows. Participates actively in the response to hyperosmotic and heat shock by preventing the aggregation of stress-denatured proteins and by disaggregating proteins, also in an autonomous, DnaK-independent fashion. Unfolded proteins bind initially to DnaJ; upon interaction with the DnaJ-bound protein, DnaK hydrolyzes its bound ATP, resulting in the formation of a stable complex. GrpE releases ADP from DnaK; ATP binding to DnaK triggers the release of the substrate protein, thus completing the reaction cycle. Several rounds of ATP-dependent interactions between DnaJ, DnaK and GrpE are required for fully efficient folding. Also involved, together with DnaK and GrpE, in the DNA replication of plasmids through activation of initiation proteins. This is Chaperone protein DnaJ from Haemophilus influenzae (strain 86-028NP).